A 118-amino-acid chain; its full sequence is Large ribosomal subunit protein bL20 (118 aa).

This sequence belongs to the bacterial ribosomal protein bL20 family. Part of the 50S ribosomal subunit. Contacts proteins L13 and L21.

Functionally, binds directly to 23S rRNA, probably serving to organize its structure. This Deinococcus radiodurans (strain ATCC 13939 / DSM 20539 / JCM 16871 / CCUG 27074 / LMG 4051 / NBRC 15346 / NCIMB 9279 / VKM B-1422 / R1) protein is Large ribosomal subunit protein bL20 (rplT).